A 797-amino-acid chain; its full sequence is Striatin-3 (797 aa).

Methionine 1 carries the post-translational modification N-acetylmethionine. Composition is skewed to gly residues over residues methionine 1–glycine 13 and glycine 23–proline 43. The interval methionine 1–proline 60 is disordered. Over residues proline 44–glutamate 56 the composition is skewed to low complexity. The interval tyrosine 71 to phenylalanine 79 is caveolin-binding. Positions alanine 77–lysine 136 form a coiled coil. Threonine 150 is modified (phosphothreonine). Residues glutamine 166 to leucine 183 form a calmodulin-binding region. Phosphoserine is present on residues serine 202, serine 214, and serine 229. 2 disordered regions span residues leucine 224–methionine 278 and aspartate 313–alanine 338. A compositionally biased stretch (basic and acidic residues) spans proline 230–serine 241. Positions asparagine 253 to methionine 265 are enriched in acidic residues. Phosphoserine is present on residues serine 257 and serine 335. WD repeat units lie at residues serine 478–lysine 517, alanine 531–tyrosine 570, glycine 584–cysteine 623, glutamine 679–serine 718, alanine 721–glutamate 760, and lysine 767–valine 797.

This sequence belongs to the WD repeat striatin family. In terms of assembly, tetramerizes. Part of the core of STRIPAK complexes composed of PP2A catalytic and scaffolding subunits, the striatins (PP2A regulatory subunits), the striatin-associated proteins MOB4, STRIP1 and STRIP2, PDCD10 and members of the STE20 kinases, such as STK24 and STK26. The STRIPAK complex can be extended by adapter proteins such as SLMAP:SIKE1 or CTTNBP2NL. Interacts with CDC42BPB.

The protein resides in the cytoplasm. It localises to the membrane. Functionally, calmodulin-binding scaffolding protein which is the center of the striatin-interacting phosphatase and kinase (STRIPAK) complexes. STRIPAK complexes have critical roles in protein (de)phosphorylation and are regulators of multiple signaling pathways including Hippo, MAPK, nuclear receptor and cytoskeleton remodeling. Different types of STRIPAK complexes are involved in a variety of biological processes such as cell growth, differentiation, apoptosis, metabolism and immune regulation. This Homo sapiens (Human) protein is Striatin-3.